The primary structure comprises 401 residues: Stearoyl-[acyl-carrier-protein] 9-desaturase 3, chloroplastic (401 aa).

The tract at residues 1 to 31 is disordered; that stretch reads MSMALLLTSPAMKQKPAVITSPRRGSSPSRR. A chloroplast-targeting transit peptide spans 1 to 35; the sequence is MSMALLLTSPAMKQKPAVITSPRRGSSPSRRLRVS. Residues Glu-140, Glu-178, His-181, Glu-231, Glu-264, and His-267 each coordinate Fe cation.

It belongs to the fatty acid desaturase type 2 family. Homodimer. Requires Fe(2+) as cofactor. As to expression, ubiquitously expressed with a preference in leaves, flowers and stems.

It is found in the plastid. It localises to the chloroplast. The catalysed reaction is octadecanoyl-[ACP] + 2 reduced [2Fe-2S]-[ferredoxin] + O2 + 2 H(+) = (9Z)-octadecenoyl-[ACP] + 2 oxidized [2Fe-2S]-[ferredoxin] + 2 H2O. It functions in the pathway lipid metabolism; fatty acid metabolism. Converts stearoyl-ACP to oleoyl-ACP by introduction of a cis double bond between carbons 9 and 10 of the acyl chain. Also able to convert palmitoyl-ACP to palmitoleoyl-ACP at the C9 position. Exhibits delta-9 palmitoyl-[acyl-carrier-protein] desaturase (PAD) activity. Involved in omega-7 monounsaturated fatty acid biosynthesis, especially in the endosperm oil. This Arabidopsis thaliana (Mouse-ear cress) protein is Stearoyl-[acyl-carrier-protein] 9-desaturase 3, chloroplastic (S-ACP-DES3).